Reading from the N-terminus, the 212-residue chain is Thymidylate kinase (212 aa).

10–17 (GLDGAGKT) is an ATP binding site.

Belongs to the thymidylate kinase family.

It carries out the reaction dTMP + ATP = dTDP + ADP. In terms of biological role, phosphorylation of dTMP to form dTDP in both de novo and salvage pathways of dTTP synthesis. In Blochmanniella pennsylvanica (strain BPEN), this protein is Thymidylate kinase.